The chain runs to 148 residues: UPF0178 protein EF_0842 (148 aa).

The protein belongs to the UPF0178 family.

In Enterococcus faecalis (strain ATCC 700802 / V583), this protein is UPF0178 protein EF_0842.